The chain runs to 576 residues: Arginine--tRNA ligase (576 aa).

The 'HIGH' region signature appears at 122 to 132 (PNVAKQMHVGH).

Belongs to the class-I aminoacyl-tRNA synthetase family. In terms of assembly, monomer.

The protein localises to the cytoplasm. The enzyme catalyses tRNA(Arg) + L-arginine + ATP = L-arginyl-tRNA(Arg) + AMP + diphosphate. This is Arginine--tRNA ligase from Yersinia pseudotuberculosis serotype IB (strain PB1/+).